The sequence spans 72 residues: Translation initiation factor IF-1 (72 aa).

The S1-like domain maps to 1-72 (MAKSDVIEME…SKGRIVYRAR (72 aa)).

The protein belongs to the IF-1 family. As to quaternary structure, component of the 30S ribosomal translation pre-initiation complex which assembles on the 30S ribosome in the order IF-2 and IF-3, IF-1 and N-formylmethionyl-tRNA(fMet); mRNA recruitment can occur at any time during PIC assembly.

The protein localises to the cytoplasm. Its function is as follows. One of the essential components for the initiation of protein synthesis. Stabilizes the binding of IF-2 and IF-3 on the 30S subunit to which N-formylmethionyl-tRNA(fMet) subsequently binds. Helps modulate mRNA selection, yielding the 30S pre-initiation complex (PIC). Upon addition of the 50S ribosomal subunit IF-1, IF-2 and IF-3 are released leaving the mature 70S translation initiation complex. In Marinobacter nauticus (strain ATCC 700491 / DSM 11845 / VT8) (Marinobacter aquaeolei), this protein is Translation initiation factor IF-1.